Reading from the N-terminus, the 356-residue chain is Guanine nucleotide-binding protein alpha-15 subunit (356 aa).

The N-myristoyl glycine moiety is linked to residue Gly2. Residue Cys5 is the site of S-palmitoyl cysteine attachment. One can recognise a G-alpha domain in the interval 33-356; the sequence is GNQKLLLLGT…GRNLRGTGME (324 aa). The tract at residues 36-49 is G1 motif; the sequence is KLLLLGTGECGKST. Residues 41-48, 177-183, 202-206, 271-274, and Ala328 contribute to the GTP site; these read GTGECGKS, LRIRIPT, DVGGQ, and NKRD. 2 residues coordinate Mg(2+): Ser48 and Thr183. The segment at 175–183 is G2 motif; sequence DMLRIRIPT. Residues 198 to 207 are G3 motif; that stretch reads FRIYDVGGQR. Residues 267–274 form a G4 motif region; sequence ILFLNKRD. Residues 326-331 are G5 motif; the sequence is TCATDT.

It belongs to the G-alpha family. As to quaternary structure, g proteins are composed of 3 units; alpha, beta and gamma. The alpha chain contains the guanine nucleotide binding site.

In terms of biological role, guanine nucleotide-binding proteins (G proteins) are involved as modulators or transducers in various transmembrane signaling systems. This Caenorhabditis elegans protein is Guanine nucleotide-binding protein alpha-15 subunit (gpa-15).